The chain runs to 152 residues: Protein SprT-like (152 aa).

A SprT-like domain is found at 7-148 (QRLVEEVSLQ…GKCKGKLNLI (142 aa)). Zn(2+) is bound at residue H67. E68 is a catalytic residue. H71 provides a ligand contact to Zn(2+).

Belongs to the SprT family. Requires Zn(2+) as cofactor.

Its subcellular location is the cytoplasm. The polypeptide is Protein SprT-like (Bacillus cereus (strain 03BB102)).